We begin with the raw amino-acid sequence, 246 residues long: tRNA (guanine-N(1)-)-methyltransferase (246 aa).

Position 114 (Gly114) interacts with S-adenosyl-L-methionine.

The protein belongs to the RNA methyltransferase TrmD family. As to quaternary structure, homodimer.

It localises to the cytoplasm. The enzyme catalyses guanosine(37) in tRNA + S-adenosyl-L-methionine = N(1)-methylguanosine(37) in tRNA + S-adenosyl-L-homocysteine + H(+). Functionally, specifically methylates guanosine-37 in various tRNAs. In Novosphingobium aromaticivorans (strain ATCC 700278 / DSM 12444 / CCUG 56034 / CIP 105152 / NBRC 16084 / F199), this protein is tRNA (guanine-N(1)-)-methyltransferase.